A 357-amino-acid chain; its full sequence is G-protein coupled receptor 183 (357 aa).

Over 1-27 (MANNFTTPLATSHGNNCDLYAHHSTAR) the chain is Extracellular. N4 carries an N-linked (GlcNAc...) asparagine glycan. A helical membrane pass occupies residues 28-53 (VLMPLHYSLVFIIGLVGNLLALVVIV). Over 54-73 (QNRKKINSTTLYSMNLVISD) the chain is Cytoplasmic. The chain crosses the membrane as a helical span at residues 74 to 91 (ILFTTALPTRIAYYALGF). R83 is a 7alpha,25-dihydroxycholesterol binding site. Residues 92-101 (DWRIGDALCR) lie on the Extracellular side of the membrane. A disulfide bond links C100 and C177. The helical transmembrane segment at 102 to 123 (VTALVFYINTYAGVNFMTCLSI) threads the bilayer. 7alpha,25-dihydroxycholesterol contacts are provided by Y108 and Y112. The tract at residues 122–130 (SIDRFFAVV) is interaction with G proteins. Topologically, residues 124–145 (DRFFAVVHPLRYNKIKRIEYAK) are cytoplasmic. The chain crosses the membrane as a helical span at residues 146-164 (GVCLSVWILVFAQTLPLLL). The Extracellular segment spans residues 165–188 (TPMSKEEGDKTTCMEYPNFEGTAS). A helical membrane pass occupies residues 189-211 (LPWILLGACLLGYVLPITVILLC). At 212–237 (YSQICCKLFRTAKQNPLTEKSGVNKK) the chain is on the cytoplasmic side. Residues 238–261 (ALNTIILIIVVFILCFTPYHVAII) form a helical membrane-spanning segment. Residue Y256 participates in 7alpha,25-dihydroxycholesterol binding. At 262-283 (QHMIKMLCSPGALECGARHSFQ) the chain is on the extracellular side. Residues 284 to 308 (ISLHFTVCLMNFNCCMDPFIYFFAC) traverse the membrane as a helical segment. The Cytoplasmic portion of the chain corresponds to 309-357 (KGYKRKVMKMLKRQVSVSISSAVRSAPEENSREMTESQMMIHSKASNGR). A phosphoserine mark is found at S324 and S345. Positions 336 to 357 (EENSREMTESQMMIHSKASNGR) are disordered. The segment covering 344–357 (ESQMMIHSKASNGR) has biased composition (polar residues).

Belongs to the G-protein coupled receptor 1 family. In terms of assembly, homodimer and heterodimer. Heterodimerizes with CXCR5; leading to modulate the interaction between of CXCL13 and CXCR5. In terms of tissue distribution, expressed in mature B-cells and increases in expression early after activation, before being down-regulated in germinal center B-cells. Expressed in astrocytes. Specifically expressed in CD4(+) dendritic cells but not in CD8(+) dendritic cells. Expressed in monocyte/osteoclasts precursors and mature osteoclasts.

The protein localises to the cell membrane. G-protein coupled receptor expressed in lymphocytes that acts as a chemotactic receptor for B-cells, T-cells, splenic dendritic cells, monocytes/macrophages and astrocytes. Receptor for oxysterol 7-alpha,25-dihydroxycholesterol (7-alpha,25-OHC) and other related oxysterols. Mediates cell positioning and movement of a number of cells by binding the 7-alpha,25-OHC ligand that forms a chemotactic gradient. Binding of 7-alpha,25-OHC mediates the correct localization of B-cells during humoral immune responses. Collaborates with CXCR5 to mediate B-cell migration; probably by forming a heterodimer with CXCR5 that affects the interaction between of CXCL13 and CXCR5. Guides B-cell movement along the B-cell zone-T-cell zone boundary and later to interfollicular and outer follicular regions. Its specific expression during B-cell maturation helps position B-cells appropriately for mounting T-dependent antibody responses. Also acts as a chemotactic receptor for some T-cells upon binding to 7-alpha,25-OHC ligand. Promotes follicular helper T (Tfh) cells differentiation by positioning activated T-cells at the follicle-T-zone interface, promoting contact of newly activated CD4 T-cells with activated dendritic cells and exposing them to Tfh-cell-promoting inducible costimulator (ICOS) ligand. Expression in splenic dendritic cells is required for their homeostasis, localization and ability to induce B- and T-cell responses: GPR183 acts as a chemotactic receptor in dendritic cells that mediates the accumulation of CD4(+) dendritic cells in bridging channels. Regulates migration of astrocytes and is involved in communication between astrocytes and macrophages. Promotes osteoclast precursor migration to bone surfaces. Signals constitutively through G(i)-alpha, but not G(s)-alpha or G(q)-alpha. Signals constitutively also via MAPK1/3 (ERK1/2). This is G-protein coupled receptor 183 from Mus musculus (Mouse).